We begin with the raw amino-acid sequence, 84 residues long: U8-theraphotoxin-Hhn1c 1 (84 aa).

A signal peptide spans 1–21 (MKVVLIVCLVWVMAMMELVSC). Intrachain disulfides connect Cys23-Cys35, Cys29-Cys44, Cys34-Cys67, Cys54-Cys75, and Cys69-Cys81.

This sequence belongs to the AVIT (prokineticin) family. Expressed by the venom gland.

It is found in the secreted. The protein is U8-theraphotoxin-Hhn1c 1 of Cyriopagopus hainanus (Chinese bird spider).